A 361-amino-acid polypeptide reads, in one-letter code: D-alanine--D-alanine ligase (361 aa).

An ATP-grasp domain is found at 134 to 344 (KLLLKSFDIP…FKDLVDNLID (211 aa)). 167-222 (KEVLGYPVIVKPAVLGSSIGINVAYSENQIESFIKEALKYDLTIVIEKFIEAREIE) contacts ATP. Mg(2+) is bound by residues D297, E311, and N313.

This sequence belongs to the D-alanine--D-alanine ligase family. Mg(2+) is required as a cofactor. It depends on Mn(2+) as a cofactor.

It localises to the cytoplasm. It catalyses the reaction 2 D-alanine + ATP = D-alanyl-D-alanine + ADP + phosphate + H(+). The protein operates within cell wall biogenesis; peptidoglycan biosynthesis. In terms of biological role, cell wall formation. This is D-alanine--D-alanine ligase from Borreliella burgdorferi (strain ZS7) (Borrelia burgdorferi).